The sequence spans 1755 residues: Gag-Pro-Pol polyprotein (1755 aa).

Gly2 carries N-myristoyl glycine; by host lipidation. Basic and acidic residues-rich tracts occupy residues 151–169 (YDEP…EKDH) and 178–191 (QRKE…KEKD). The disordered stretch occupies residues 151–191 (YDEPYEEKEKADKNEEKDHVRKIKKVVQRKENSEGKRKEKD). Residues 305–308 (PSAP) carry the PTAP/PSAP motif motif. 2 CCHC-type zinc fingers span residues 525–542 (PVCF…DCKD) and 552–569 (GLCP…ECKS). The interval 572–631 (DKDGNPLPPLETNAENSKNLVKGQSPSPAQKGDGVKGSGLNPEAPPFTIHDLPRGTPGSA) is disordered. The segment covering 584 to 599 (NAENSKNLVKGQSPSP) has biased composition (polar residues). The Peptidase A2 domain maps to 766–841 (FLGLLDTGAD…LPFTLWGRDI (76 aa)). Asp771 (protease; shared with dimeric partner) is an active-site residue. The region spanning 905–1093 (LQLGHLEESN…DNLKYLGTHI (189 aa)) is the Reverse transcriptase domain. 7 residues coordinate Mg(2+): Asp970, Asp1045, Asp1046, Asp1316, Glu1346, Asp1366, and Asp1429. The 131-residue stretch at 1307-1437 (LEKGIVIFTD…ADSLTRILTA (131 aa)) folds into the RNase H type-1 domain. The segment at 1436 to 1477 (TALESAQESHALHHQNAAALRFQFHITREQAREIVKLCPNCP) adopts an Integrase-type zinc-finger fold. 4 residues coordinate Zn(2+): His1445, His1449, Cys1473, and Cys1476. The region spanning 1490–1647 (RGLKPRVLWQ…TAAERHWGPI (158 aa)) is the Integrase catalytic domain. Mg(2+)-binding residues include Asp1501, Asp1558, and Glu1594. The segment at residues 1653-1702 (PMVMWKDLLTGSWKGPDVLITAGRGYACVFPQDAETPIWVPDRFIRPFTE) is a DNA-binding region (integrase-type). The segment at 1699 to 1755 (PFTERKEATPTPGTAEKTPPRDEKDQQESPKNESSPHQREDGLATSAGVDLRSGGGP) is disordered. Positions 1716 to 1740 (TPPRDEKDQQESPKNESSPHQREDG) are enriched in basic and acidic residues.

It belongs to the retroviral Pol polyprotein family. In terms of assembly, homodimer; when myristoylated. Homodimer. As to quaternary structure, homooctamer. In terms of assembly, homotrimer. It depends on Mg(2+) as a cofactor. In terms of processing, specific enzymatic cleavages in vivo yield mature proteins. Released by autocatalytic processing. Post-translationally, myristoylated. Myristoylation of the matrix (MA) domain mediates the transport and binding of Gag polyproteins to the host plasma membrane and is required for the assembly of viral particles.

Its subcellular location is the virion. It catalyses the reaction DNA(n) + a 2'-deoxyribonucleoside 5'-triphosphate = DNA(n+1) + diphosphate. The catalysed reaction is Endonucleolytic cleavage to 5'-phosphomonoester.. It carries out the reaction dUTP + H2O = dUMP + diphosphate + H(+). Its activity is regulated as follows. Inhibited by pepstatin A. Matrix protein. In terms of biological role, nucleocapsid protein p14: Binds strongly to viral nucleic acids and promote their aggregation. Also destabilizes the nucleic acids duplexes via highly structured zinc-binding motifs. Its function is as follows. Capsid protein. Functionally, NC-dUTPase has dUTPase activity, thereby preventing incorporation of uracil into DNA. The aspartyl protease mediates proteolytic cleavages of Gag and Gag-Pol polyproteins during or shortly after the release of the virion from the plasma membrane. Cleavages take place as an ordered, step-wise cascade to yield mature proteins. This process is called maturation. Displays maximal activity during the budding process just prior to particle release from the cell. In terms of biological role, RT is a multifunctional enzyme that converts the viral dimeric RNA genome into dsDNA in the cytoplasm, shortly after virus entry into the cell. This enzyme displays a DNA polymerase activity that can copy either DNA or RNA templates, and a ribonuclease H (RNase H) activity that cleaves the RNA strand of RNA-DNA heteroduplexes in a partially processive 3' to 5' endonucleasic mode. Conversion of viral genomic RNA into dsDNA requires many steps. A tRNA binds to the primer-binding site (PBS) situated at the 5' end of the viral RNA. RT uses the 3' end of the tRNA primer to perfom a short round of RNA-dependent minus-strand DNA synthesis. The reading proceeds through the U5 region and ends after the repeated (R) region which is present at both ends of viral RNA. The portion of the RNA-DNA heteroduplex is digested by the RNase H, resulting in a ssDNA product attached to the tRNA primer. This ssDNA/tRNA hybridizes with the identical R region situated at the 3' end of viral RNA. This template exchange, known as minus-strand DNA strong stop transfer, can be either intra- or intermolecular. RT uses the 3' end of this newly synthesized short ssDNA to perfom the RNA-dependent minus-strand DNA synthesis of the whole template. RNase H digests the RNA template except for a polypurine tract (PPT) situated at the 5' end of the genome. It is not clear if both polymerase and RNase H activities are simultaneous. RNase H probably can proceed both in a polymerase-dependent (RNA cut into small fragments by the same RT performing DNA synthesis) and a polymerase-independent mode (cleavage of remaining RNA fragments by free RTs). Secondly, RT performs DNA-directed plus-strand DNA synthesis using the PPT that has not been removed by RNase H as primers. PPT and tRNA primers are then removed by RNase H. The 3' and 5' ssDNA PBS regions hybridize to form a circular dsDNA intermediate. Strand displacement synthesis by RT to the PBS and PPT ends produces a blunt ended, linear dsDNA copy of the viral genome that includes long terminal repeats (LTRs) at both ends. Its function is as follows. Catalyzes viral DNA integration into the host chromosome, by performing a series of DNA cutting and joining reactions. The sequence is that of Gag-Pro-Pol polyprotein (gag-pro-pol) from Mus musculus (Mouse).